Consider the following 60-residue polypeptide: Short neurotoxin 1 (60 aa).

4 disulfides stabilise this stretch: C3-C22, C17-C39, C41-C52, and C53-C58.

The protein belongs to the three-finger toxin family. Short-chain subfamily. Type I alpha-neurotoxin sub-subfamily. In terms of tissue distribution, expressed by the venom gland.

It localises to the secreted. In terms of biological role, binds to muscle nicotinic acetylcholine receptor (nAChR) and inhibit acetylcholine from binding to the receptor, thereby impairing neuromuscular transmission. The chain is Short neurotoxin 1 from Dendroaspis viridis (Western green mamba).